Consider the following 360-residue polypeptide: DNA replication and repair protein RecF (360 aa).

30 to 37 (GHNGSGKT) is a binding site for ATP.

The protein belongs to the RecF family.

Its subcellular location is the cytoplasm. Its function is as follows. The RecF protein is involved in DNA metabolism; it is required for DNA replication and normal SOS inducibility. RecF binds preferentially to single-stranded, linear DNA. It also seems to bind ATP. In Shewanella denitrificans (strain OS217 / ATCC BAA-1090 / DSM 15013), this protein is DNA replication and repair protein RecF.